A 555-amino-acid chain; its full sequence is Carboxysome assembly protein CcmM (555 aa).

The interval Met-1–Val-209 is has carbonic anhydrase (CA) activity. Residue Glu-56 is the Proton donor/acceptor of the active site. Zn(2+) is bound by residues His-75, His-102, and His-107. Cys-194 and Cys-200 are disulfide-bonded. A rbcS-like repeat 1, SSUL1 region spans residues Ser-223–Pro-315. Disordered stretches follow at residues Thr-323–Ala-351 and Asn-441–Ala-464. Low complexity-rich tracts occupy residues Ser-330–Ala-351 and Ala-445–Ala-464. The tract at residues Tyr-347–Pro-440 is rbcS-like repeat 2, SSUL2. The tract at residues Ser-460–Pro-555 is rbcS-like repeat 3, SSUL3.

It belongs to the gamma-class carbonic anhydrase family. As to quaternary structure, probable homotrimer; zinc is bound between adjacent monomers. Full length protein (M58) interacts with CcmN. The C-terminal RbcS-like domains (SSUL) bind to holo-RuBisCO, as does the M35 short form. It depends on Zn(2+) as a cofactor. In terms of processing, the first amino acid of the short form (equivalent to Val-226) is not seen in Edman degradation, while Ser-230 may be post-translationally modified. Migrates in gels as 2 about equal forms of about 60 and 35 kDa (called M58 and M35). They are probably the result of alternative translation initiation.

It is found in the carboxysome. The protein localises to the cytoplasm. It catalyses the reaction hydrogencarbonate + H(+) = CO2 + H2O. Its activity is regulated as follows. Carbonic anhydrase (CA) activity is probably under redox control to remain inactive in the cytoplasm. Carbonic anhydrase (CA) activity of full-length protein and N-terminal fragment is inhibited by ethoxyzolamide. N-terminal fragment CA activity is activated under oxidizing conditions and inhibited under reducing conditions. Its function is as follows. Functions as a scaffold protein for the assembly of beta-carboxysomes, initiates carboxysome assembly by coalescing RuBisCO (ribulose bisphosphate carboxylase, rbcL-rbcS). Produced as a full-length (M58) and a short form (M35), possibly by alternative translation initiation; probably both forms are required for correct carboxysome assembly and growth. In this strain both forms are equally abundant. In terms of biological role, a moderately active carbonic anhydrase that catalyzes the reversible hydration of carbon dioxide. Essential to photosynthetic carbon dioxide fixation, supplies CO(2) to ribulose bisphosphate carboxylase (RuBisCO) in the carboxysome. Also hydrolyzes COS. Functionally, beta-carboxysome assembly initiates when soluble RuBisCO is condensed into a liquid matrix in a pre-carboxysome by the RbcS-like domains of probably both forms of CcmM. CcmN interacts with the N-terminus of full length CcmM, and then recruits the shell proteins (CcmK) via CcmN's encapsulation peptide. Shell formation requires both CcmK proteins and CcmO. CcmL caps the otherwise elongated carboxysome. Once fully encapsulated carboxysomes are formed, they migrate within the cell probably via interactions with the cytoskeleton. This Nostoc sp. (strain PCC 7120 / SAG 25.82 / UTEX 2576) protein is Carboxysome assembly protein CcmM.